Here is a 126-residue protein sequence, read N- to C-terminus: Phosphoribosyl-AMP cyclohydrolase (126 aa).

Residue aspartate 73 coordinates Mg(2+). Cysteine 74 contributes to the Zn(2+) binding site. Mg(2+)-binding residues include aspartate 75 and aspartate 77. 2 residues coordinate Zn(2+): cysteine 91 and cysteine 98.

It belongs to the PRA-CH family. Homodimer. It depends on Mg(2+) as a cofactor. Zn(2+) is required as a cofactor.

Its subcellular location is the cytoplasm. It carries out the reaction 1-(5-phospho-beta-D-ribosyl)-5'-AMP + H2O = 1-(5-phospho-beta-D-ribosyl)-5-[(5-phospho-beta-D-ribosylamino)methylideneamino]imidazole-4-carboxamide. It participates in amino-acid biosynthesis; L-histidine biosynthesis; L-histidine from 5-phospho-alpha-D-ribose 1-diphosphate: step 3/9. Its function is as follows. Catalyzes the hydrolysis of the adenine ring of phosphoribosyl-AMP. This is Phosphoribosyl-AMP cyclohydrolase from Solibacter usitatus (strain Ellin6076).